Here is a 245-residue protein sequence, read N- to C-terminus: MAGVWSLSLPSCLLSLLLLLQLSRSYAGQFRVIGPGHPIRALVGDEAELPCRISPGKNATGMEVGWYRSPFSRVVHLYRNGKDQDAEQAPEYRGRTELLKESIGEGKVALRIQNVRFSDEGGYTCFFRDHSYQEEAAVELKVEDPFYWINPGVLALIALVPMLLLQVSVGLVFLFLQHRLRGKLRAEVENLHRTFDPHFLRVPCWKITLFVIVPVLGPLVALIICYNWLHRRLAGQFLEELRNPF.

The N-terminal stretch at 1–27 (MAGVWSLSLPSCLLSLLLLLQLSRSYA) is a signal peptide. At 28 to 155 (GQFRVIGPGH…FYWINPGVLA (128 aa)) the chain is on the extracellular side. The Ig-like domain maps to 30–139 (FRVIGPGHPI…HSYQEEAAVE (110 aa)). Residues C51 and C125 are joined by a disulfide bond. N58 carries an N-linked (GlcNAc...) asparagine glycan. The helical transmembrane segment at 156–176 (LIALVPMLLLQVSVGLVFLFL) threads the bilayer. At 177–208 (QHRLRGKLRAEVENLHRTFDPHFLRVPCWKIT) the chain is on the cytoplasmic side. The helical transmembrane segment at 209–229 (LFVIVPVLGPLVALIICYNWL) threads the bilayer. Residues 230-245 (HRRLAGQFLEELRNPF) lie on the Extracellular side of the membrane.

It belongs to the immunoglobulin superfamily. BTN/MOG family. Homodimer. In terms of tissue distribution, found exclusively in the CNS, where it is localized on the surface of myelin and oligodendrocyte cytoplasmic membranes.

The protein resides in the membrane. Mediates homophilic cell-cell adhesion. Minor component of the myelin sheath. May be involved in completion and/or maintenance of the myelin sheath and in cell-cell communication. This is Myelin-oligodendrocyte glycoprotein (Mog) from Rattus norvegicus (Rat).